A 173-amino-acid chain; its full sequence is ATP synthase subunit beta, mitochondrial (173 aa).

It belongs to the ATPase alpha/beta chains family. As to quaternary structure, F-type ATPases have 2 components, CF(1) - the catalytic core - and CF(0) - the membrane proton channel. CF(1) has five subunits: alpha(3), beta(3), gamma(1), delta(1), epsilon(1). CF(0) has three main subunits: a, b and c.

The protein resides in the mitochondrion. Its subcellular location is the mitochondrion inner membrane. The enzyme catalyses ATP + H2O + 4 H(+)(in) = ADP + phosphate + 5 H(+)(out). Mitochondrial membrane ATP synthase (F(1)F(0) ATP synthase or Complex V) produces ATP from ADP in the presence of a proton gradient across the membrane which is generated by electron transport complexes of the respiratory chain. F-type ATPases consist of two structural domains, F(1) - containing the extramembraneous catalytic core and F(0) - containing the membrane proton channel, linked together by a central stalk and a peripheral stalk. During catalysis, ATP synthesis in the catalytic domain of F(1) is coupled via a rotary mechanism of the central stalk subunits to proton translocation. Subunits alpha and beta form the catalytic core in F(1). Rotation of the central stalk against the surrounding alpha(3)beta(3) subunits leads to hydrolysis of ATP in three separate catalytic sites on the beta subunits. In Actinidia deliciosa (Kiwi), this protein is ATP synthase subunit beta, mitochondrial (ATPB).